The primary structure comprises 450 residues: ADP-specific phosphofructokinase (450 aa).

In terms of domain architecture, ADPK spans 1-449; the sequence is MIPEHLSIYT…FLTYLEFLKR (449 aa). 3 residues coordinate Mg(2+): glutamate 260, glutamate 290, and aspartate 433. The Proton acceptor role is filled by aspartate 433.

The protein belongs to the carbohydrate kinase PfkC family. Requires Mg(2+) as cofactor.

It is found in the cytoplasm. It catalyses the reaction beta-D-fructose 6-phosphate + ADP = beta-D-fructose 1,6-bisphosphate + AMP + H(+). Its pathway is carbohydrate degradation; glycolysis. Functionally, catalyzes the phosphorylation of fructose 6-phosphate to fructose 1,6-bisphosphate using ADP as the phosphate donor. The chain is ADP-specific phosphofructokinase from Pyrococcus horikoshii (strain ATCC 700860 / DSM 12428 / JCM 9974 / NBRC 100139 / OT-3).